We begin with the raw amino-acid sequence, 217 residues long: tRNA (guanine-N(7)-)-methyltransferase (217 aa).

Positions 43, 68, 101, and 123 each coordinate S-adenosyl-L-methionine. Residue Lys-127 coordinates substrate. The tract at residues Arg-129–Arg-134 is interaction with RNA. Residues Asp-159 and Thr-196–Glu-199 each bind substrate.

This sequence belongs to the class I-like SAM-binding methyltransferase superfamily. TrmB family.

The catalysed reaction is guanosine(46) in tRNA + S-adenosyl-L-methionine = N(7)-methylguanosine(46) in tRNA + S-adenosyl-L-homocysteine. It functions in the pathway tRNA modification; N(7)-methylguanine-tRNA biosynthesis. Functionally, catalyzes the formation of N(7)-methylguanine at position 46 (m7G46) in tRNA. The chain is tRNA (guanine-N(7)-)-methyltransferase from Clostridium botulinum (strain Langeland / NCTC 10281 / Type F).